The sequence spans 105 residues: UPF0473 protein SAG2089 (105 aa).

This sequence belongs to the UPF0473 family.

The chain is UPF0473 protein SAG2089 from Streptococcus agalactiae serotype V (strain ATCC BAA-611 / 2603 V/R).